A 553-amino-acid polypeptide reads, in one-letter code: Mucolipin-3 (553 aa).

The Cytoplasmic segment spans residues 1–62 (MANPEIVISS…FWARGRKPWK (62 aa)). Residues 52–62 (KFWARGRKPWK) are interaction with phosphoinositides. A helical membrane pass occupies residues 63-83 (LAIQILKIAMVTIQLVLFGLS). Residues 84-283 (NQMVVAFKEE…VSGSIQKNTH (200 aa)) are Extracellular-facing. Residues 104–118 (KGYIDRMDDTYAVYT) form an extracellular/lumenal pore loop region. N-linked (GlcNAc...) asparagine glycosylation occurs at Asn-138. Cys-159 and Cys-185 form a disulfide bridge. A glycan (N-linked (GlcNAc...) asparagine) is linked at Asn-205. Residues Cys-238 and Cys-269 are joined by a disulfide bond. Residues 284-304 (NMMIFDAFVILTCLVSLILCI) form a helical membrane-spanning segment. The Cytoplasmic segment spans residues 305–341 (RSVISGLQLQQEFVNFFLLHYKKDVSVSDQMEFVNGW). A helical transmembrane segment spans residues 342-362 (YIMIIISDILTIIGSILKMEI). Topologically, residues 363–371 (QAKSLTSYD) are extracellular. Residues 372 to 392 (VCSILLGTSTMLVWLGVIRYL) traverse the membrane as a helical segment. Topologically, residues 393 to 414 (GFFAKYNLLILTLQAALPNVIR) are cytoplasmic. A helical transmembrane segment spans residues 415 to 435 (FCCCAAMIYLGYCFCGWIVLG). The Extracellular portion of the chain corresponds to 436–443 (PYHNKFRS). An intramembrane region (pore-forming) is located at residues 444 to 464 (LNMVSECLFSLINGDDMFATF). A Selectivity filter motif is present at residues 456 to 459 (NGDD). At 465-475 (AKMQQKSYLVW) the chain is on the extracellular side. The helical transmembrane segment at 476 to 497 (LFSRIYLYSFISLFIYMILSLF) threads the bilayer. Residues 498–553 (IALITDTYETIKHYQQDGFPETELRTFISECKDLPNSGKFRLEDDPPVSLFCCCKK) lie on the Cytoplasmic side of the membrane.

The protein belongs to the transient receptor (TC 1.A.4) family. Polycystin subfamily. MCOLN3 sub-subfamily. Homotetramer. Can heterooligomerize with MCOLN1; heteromeric assemblies have different channel properties as compared to the respective homooligomers and may be tissue-specific. May heterooligomerize with TRPV5 to form a functional distinct ion channel. Interacts with GABARAPL2. Post-translationally, N-glycosylated.

The protein localises to the lysosome membrane. It is found in the early endosome membrane. It localises to the late endosome membrane. The protein resides in the cytoplasmic vesicle. Its subcellular location is the autophagosome membrane. The protein localises to the cell projection. It is found in the stereocilium membrane. It catalyses the reaction Ca(2+)(in) = Ca(2+)(out). The catalysed reaction is Mg(2+)(in) = Mg(2+)(out). The enzyme catalyses K(+)(in) = K(+)(out). It carries out the reaction Na(+)(in) = Na(+)(out). Channel activity is activated by PtdIns(3,5)P2 (phosphatidylinositol 3,5-bisphosphate). Inhibited by lumenal H(+) and Na(+). The channel pore shows dynamic behavior and undergoes spontaneous, Ca(2+)-dependent modulation when conducting Ca(2+). In terms of biological role, nonselective cation channel probably playing a role in the regulation of membrane trafficking events. Acts as a Ca(2+)-permeable cation channel with inwardly rectifying activity. Mediates release of Ca(2+) from endosomes to the cytoplasm, contributes to endosomal acidification and is involved in the regulation of membrane trafficking and fusion in the endosomal pathway. Also permeable to Mg(2+), Na(+) and K(+). Does not seem to act as mechanosensory transduction channel in inner ear sensory hair cells. Proposed to play a critical role at the cochlear stereocilia ankle-link region during hair-bundle growth. Involved in the regulation of autophagy. Through association with GABARAPL2 may be involved in autophagosome formation possibly providing Ca(2+) for the fusion process. Through a possible and probably tissue-specific heteromerization with MCOLN1 may be at least in part involved in many lysosome-dependent cellular events. Possible heteromeric ion channel assemblies with TRPV5 show pharmacological similarity with TRPML3. In Callithrix jacchus (White-tufted-ear marmoset), this protein is Mucolipin-3.